We begin with the raw amino-acid sequence, 207 residues long: Dephospho-CoA kinase (207 aa).

The DPCK domain maps to 10–207 (ILGLTGGIGS…FYLTLSGGQS (198 aa)). 18–23 (GSGKSA) is a binding site for ATP.

The protein belongs to the CoaE family.

Its subcellular location is the cytoplasm. The enzyme catalyses 3'-dephospho-CoA + ATP = ADP + CoA + H(+). It participates in cofactor biosynthesis; coenzyme A biosynthesis; CoA from (R)-pantothenate: step 5/5. In terms of biological role, catalyzes the phosphorylation of the 3'-hydroxyl group of dephosphocoenzyme A to form coenzyme A. The sequence is that of Dephospho-CoA kinase from Pseudomonas fluorescens (strain Pf0-1).